The chain runs to 158 residues: PTS system fructose-specific EIIB component (158 aa).

The PTS EIIB type-2 domain occupies 1 to 98 (MKLVAVTSCP…AEAVVQKAVE (98 aa)). Cys9 serves as the catalytic Phosphocysteine intermediate. Cys9 carries the post-translational modification Phosphocysteine; by EIIA. The disordered stretch occupies residues 104–147 (KTGSVTFGSGDDGEDADVGADDSSDDADAAESDEPVRRGGDPEK). Positions 114-136 (DDGEDADVGADDSSDDADAAESD) are enriched in acidic residues. Residues 137 to 147 (EPVRRGGDPEK) show a composition bias toward basic and acidic residues.

It is found in the cytoplasm. The enzyme catalyses D-fructose(out) + N(pros)-phospho-L-histidyl-[protein] = D-fructose 1-phosphate(in) + L-histidyl-[protein]. Functionally, the phosphoenolpyruvate-dependent sugar phosphotransferase system (sugar PTS), a major carbohydrate active transport system, catalyzes the phosphorylation of incoming sugar substrates concomitantly with their translocation across the cell membrane. The enzyme II PtfABC PTS system is involved in fructose transport. The chain is PTS system fructose-specific EIIB component from Haloferax volcanii (strain ATCC 29605 / DSM 3757 / JCM 8879 / NBRC 14742 / NCIMB 2012 / VKM B-1768 / DS2) (Halobacterium volcanii).